The primary structure comprises 298 residues: Acetate permease A (298 aa).

The tract at residues 1 to 43 (MSAEQNHGLEKDVGGPAAPAAAAPNAPAAAPGAPPAGMSAEEH) is disordered. The segment covering 14-37 (GGPAAPAAAAPNAPAAAPGAPPAG) has biased composition (low complexity). Helical transmembrane passes span 86-106 (APLGLSAFALTTFVLSCINMG), 115-135 (IVIALAFGYGGLVQLLAGMWE), 146-166 (ALSSYGGFWIAFAIVLTPGGF), 185-205 (SFGLFLMGWFIFTTIMLFCTL), 210-230 (AFFLLFLFLDLAFLLLGVGYI), and 245-265 (AGGFFGLLAAFAAWYNALAGI).

Belongs to the acetate uptake transporter (AceTr) (TC 2.A.96) family.

It localises to the cell membrane. It is found in the vacuole membrane. In terms of biological role, high affinity monocarboxylate transporter (MCT) involved in acetate uptake. Unlike other activities involved in acetate utilization, acpA is dispensable for growth on the acetate precursor ethanol. The chain is Acetate permease A from Emericella nidulans (strain FGSC A4 / ATCC 38163 / CBS 112.46 / NRRL 194 / M139) (Aspergillus nidulans).